Consider the following 2824-residue polypeptide: Highly reducing polyketide synthase stpks1 (2824 aa).

In terms of domain architecture, Ketosynthase family 3 (KS3) spans Pro8–Ser428. Active-site for beta-ketoacyl synthase activity residues include Cys177, His312, and His348. The interval Gln517 to Leu854 is malonyl-CoA:ACP transacylase (MAT) domain. The active-site For malonyltransferase activity is Ser616. An N-terminal hotdog fold region spans residues Met886–Lys1004. A PKS/mFAS DH domain is found at Met886–Thr1168. The segment at Glu894–Gly1083 is dehydratase (DH) domain. The active-site Proton acceptor; for dehydratase activity is the His925. The interval Thr1018–Thr1168 is C-terminal hotdog fold. The Proton donor; for dehydratase activity role is filled by Asp1078. Residues Pro1101–Asp1449 form a methyltransferase (CMet) domain region. Residues Ala1213–Ser1232 form a disordered region. Residues Thr1518–Ser1840 form an enoyl reductase (ER) domain region. Positions Ala1842–Val2096 are ketoreductase (KR) domain. The region spanning Asp2109–Phe2196 is the Carrier domain. Residues Ala2200–Met2414 form a thioesterase (TE) domain region. Residues Tyr2608 to Cys2809 are methyltransferase (CMet) domain.

It functions in the pathway mycotoxin biosynthesis. Functionally, highly reducing polyketide synthase; part of the gene cluster that mediates the biosynthesis of strobilurin A, an antifungal polyketide that contains a key beta-methoxyacrylate toxophore that targets the complex III of the mitochondrial electron transport chain. Strobilurin biosynthesis begins with construction of benzoyl CoA by step-wise elimination of ammonia from phenylalanine by the phenylalanine ammonia-lyase str11, oxygenation by str8 and retro-Claisen reaction to form benzoic acid, which is activated to its CoA thiolester benzoyl CoA by the dedicated CoA ligase str10. Benzoyl CoA forms the starter unit for the highly reducing polyketide synthase stpks1 that produces the polyketide prestrobilutin A. The FAD-dependent oxygenase str9 then catalyzes the key oxidative rearrangement responsible for the creation of the beta-methoxyacrylate toxophore. Str9 performs epoxidation of the 2,3 olefin of prestrobilutin A, followed by Meinwald rearrangement to furnish the aldehyde intermediate. Rapid enolization of the aldehyde intermediate would give the beta-methoxyacrylate skeleton and methylations catalyzed by str2 and str3 complete the synthesis and lead to the production of strobilurin A. The short-chain dehydrogenase stl2 and the dehydrogenase str4 play a role in the shunt pathway leading to the production of bolineol. The cluster encodes no obvious halogenase gene that could be involved in production of strobilurin B, nor any obvious dimethylallyl-transferase that could be involved in the production of strobilurin G. It is possible that unknown proteins encoded in, or near, the cluster (such as str1 or stl1) may form new classes of halogenases or dimethylally-transferases, or that the responsible genes are located elsewhere on the genome. Similarly, proteins encoded by str5/str6 hydrolases appear to have no chemical role in the biosynthesis of strobilurin A. Finally, no obvious self-resistance gene is found within the cluster. The sequence is that of Highly reducing polyketide synthase stpks1 from Strobilurus tenacellus.